The following is a 390-amino-acid chain: Homoserine O-succinyltransferase (390 aa).

Residues 56–365 (NAVLICHALS…SPHGHDAFLL (310 aa)) form the AB hydrolase-1 domain. Catalysis depends on Ser162, which acts as the Nucleophile. Residue Arg232 coordinates substrate. Residues Asp327 and His360 contribute to the active site. Asp361 lines the substrate pocket.

It belongs to the AB hydrolase superfamily. MetX family. In terms of assembly, homodimer.

It localises to the cytoplasm. It catalyses the reaction L-homoserine + succinyl-CoA = O-succinyl-L-homoserine + CoA. Its pathway is amino-acid biosynthesis; L-methionine biosynthesis via de novo pathway; O-succinyl-L-homoserine from L-homoserine: step 1/1. Transfers a succinyl group from succinyl-CoA to L-homoserine, forming succinyl-L-homoserine. In vitro, also has serine succinyl transferase activity. This is Homoserine O-succinyltransferase from Litchfieldella anticariensis (strain DSM 16096 / CECT 5854 / CIP 108499 / LMG 22089 / FP35) (Halomonas anticariensis).